A 416-amino-acid polypeptide reads, in one-letter code: Adipocyte plasma membrane-associated protein (416 aa).

Over 1-39 the chain is Cytoplasmic; it reads MNEPEGLRFRRLNRPQIITDELQEPQYKGTSTYSGKVFR. Residues 40-60 form a helical membrane-spanning segment; the sequence is VILVTLGGCLILPLLVVFFLL. Over 61 to 412 the chain is Extracellular; that stretch reads ESPIHPELLS…FRSPYLCKLD (352 aa). The N-linked (GlcNAc...) asparagine glycan is linked to N160.

This sequence belongs to the strictosidine synthase family.

The protein resides in the membrane. This is Adipocyte plasma membrane-associated protein (apmap) from Salmo salar (Atlantic salmon).